The primary structure comprises 414 residues: Histidine--tRNA ligase (414 aa).

This sequence belongs to the class-II aminoacyl-tRNA synthetase family. In terms of assembly, homodimer.

The protein resides in the cytoplasm. The enzyme catalyses tRNA(His) + L-histidine + ATP = L-histidyl-tRNA(His) + AMP + diphosphate + H(+). This is Histidine--tRNA ligase from Ehrlichia ruminantium (strain Welgevonden).